A 548-amino-acid chain; its full sequence is Membrane protein insertase YidC (548 aa).

A helical membrane pass occupies residues 6–26; the sequence is NLLVIALLFVSFMIWQAWEQD. The segment at 28–58 is disordered; that stretch reads NPQPQQQQTTQTTTTAAGSAADQGVPASGQG. The segment covering 29-42 has biased composition (low complexity); the sequence is PQPQQQQTTQTTTT. 4 consecutive transmembrane segments (helical) span residues 350–370, 420–440, 458–478, and 499–519; these read FLGNWGFSIIVITFIVRGIMY, LGGCFPLLIQMPIFLALYYML, LSAQDPYYILPILMGITMFFI, and PVIFTVFFLWFPSGLVLYYIV.

Belongs to the OXA1/ALB3/YidC family. Type 1 subfamily. In terms of assembly, interacts with the Sec translocase complex via SecD. Specifically interacts with transmembrane segments of nascent integral membrane proteins during membrane integration.

It localises to the cell inner membrane. Its function is as follows. Required for the insertion and/or proper folding and/or complex formation of integral membrane proteins into the membrane. Involved in integration of membrane proteins that insert both dependently and independently of the Sec translocase complex, as well as at least some lipoproteins. Aids folding of multispanning membrane proteins. In Enterobacter sp. (strain 638), this protein is Membrane protein insertase YidC.